A 923-amino-acid chain; its full sequence is Inorganic phosphate transporter PHO87 (923 aa).

Residues 1–334 (MRFSHFLKYN…HMNTRQELIE (334 aa)) enclose the SPX domain. At 1 to 461 (MRFSHFLKYN…KLFFGKRAMK (461 aa)) the chain is on the extracellular side. Disordered regions lie at residues 40–74 (ETPT…SSSK) and 86–107 (FGSK…IDGN). Residues 95-104 (KRGDSDEKAI) show a composition bias toward basic and acidic residues. Lys-102 participates in a covalent cross-link: Glycyl lysine isopeptide (Lys-Gly) (interchain with G-Cter in ubiquitin). 3 N-linked (GlcNAc...) asparagine glycosylation sites follow: Asn-162, Asn-202, and Asn-274. The chain crosses the membrane as a helical span at residues 462-482 (IGFIIIVTGVLLGVKTFNDPV). The Cytoplasmic portion of the chain corresponds to 483–493 (EHRCMALVECC). The chain crosses the membrane as a helical span at residues 494–514 (AFLWASEAIPLHITGLLVPLL). The Extracellular segment spans residues 515-537 (TVLFRVLKDDDGKVMGAAAASTE). Residues 538–558 (ILGTMWSSTIMILLAGFTLGE) traverse the membrane as a helical segment. Residues 559–583 (ALSQYNVAKVLASWLLALAGTKPRN) are Cytoplasmic-facing. A helical transmembrane segment spans residues 584 to 604 (VLLMAMSVVFFLSMWISNVAS). The Extracellular segment spans residues 605-627 (PVLTYSLLTPLLDPLDYTSPFAK). The helical transmembrane segment at 628–648 (ALVMGVALSADIGGMASPISS) threads the bilayer. Over 649-667 (PQNIISMQYLKPYGIGWGQ) the chain is Cytoplasmic. Residues 668 to 688 (FFAVALPTGILSMLCSWALMI) form a helical membrane-spanning segment. Residues 689 to 707 (LTFKIGKTKLEKFKPIRTR) lie on the Extracellular side of the membrane. The helical transmembrane segment at 708-728 (FTIKQYFIIIVTIATILLWCV) threads the bilayer. Residues 729–735 (ESQIESA) are Cytoplasmic-facing. A helical transmembrane segment spans residues 736 to 756 (FGSSGEIAVIPIVLFFGTGLL). At 757-767 (STKDFNTFPWS) the chain is on the extracellular side. The chain crosses the membrane as a helical span at residues 768–788 (IVVLAMGGIALGKAVSSSGLL). Residues 789-802 (VTIARALQKKIQND) are Cytoplasmic-facing. Residues 803–823 (GVFAILCIFGILMLVVGTFVS) traverse the membrane as a helical segment. The Extracellular portion of the chain corresponds to 824 to 849 (HTVSAIIIIPLVQEVGDKLSDPKAAP). Residues 850 to 870 (ILVFGCALLASCGMGLASSGF) form a helical membrane-spanning segment. Topologically, residues 871-898 (PNVTAISMTDKKGNRWLTVGAFISRGVP) are cytoplasmic. A helical transmembrane segment spans residues 899-919 (ASLLAFVCVITLGYGISSSVL). Topologically, residues 920–923 (KGST) are extracellular.

The protein belongs to the CitM (TC 2.A.11) transporter family.

It localises to the membrane. Functionally, involved in the uptake of inorganic phosphate. The protein is Inorganic phosphate transporter PHO87 (PHO87) of Saccharomyces cerevisiae (strain ATCC 204508 / S288c) (Baker's yeast).